We begin with the raw amino-acid sequence, 379 residues long: Protein hairy (379 aa).

The tract at residues 20–50 (STQQQQQQQQHKEAPIKSDRRSNKPIMEKRR) is disordered. Residues 29 to 47 (QHKEAPIKSDRRSNKPIME) are compositionally biased toward basic and acidic residues. The segment at 36–55 (KSDRRSNKPIMEKRRRARIN) is interaction with Topors. The region spanning 38 to 95 (DRRSNKPIMEKRRRARINNCLNELKTLILDATKKDPARHSKLEKADILEKTVKHLQEL) is the bHLH domain. In terms of domain architecture, Orange spans 114-143 (FKAGFADCANEVSRFPGLDSTQRRRLLQHL). Disordered stretches follow at residues 167-208 (QSLH…NTTA) and 298-345 (QRTA…VKPS). Low complexity-rich tracts occupy residues 182-207 (PEQE…TNTT) and 301-328 (ASTG…GSYA). The short motif at 376 to 379 (WRPW) is the WRPW motif element.

Transcription repression requires formation of a complex with a corepressor protein (Groucho).

Its subcellular location is the nucleus. In terms of biological role, pair-rule protein that regulates embryonic segmentation and adult bristle patterning. Transcriptional repressor of genes that require a bHLH protein for their transcription (e.g. ftz). In Drosophila virilis (Fruit fly), this protein is Protein hairy.